A 206-amino-acid polypeptide reads, in one-letter code: Ribosomal RNA small subunit methyltransferase G (206 aa).

Residues Gly73, Leu78, 124-125, and Arg139 contribute to the S-adenosyl-L-methionine site; that span reads VE.

Belongs to the methyltransferase superfamily. RNA methyltransferase RsmG family.

The protein localises to the cytoplasm. The enzyme catalyses guanosine(527) in 16S rRNA + S-adenosyl-L-methionine = N(7)-methylguanosine(527) in 16S rRNA + S-adenosyl-L-homocysteine. In terms of biological role, specifically methylates the N7 position of guanine in position 527 of 16S rRNA. This Photorhabdus laumondii subsp. laumondii (strain DSM 15139 / CIP 105565 / TT01) (Photorhabdus luminescens subsp. laumondii) protein is Ribosomal RNA small subunit methyltransferase G.